The following is a 773-amino-acid chain: Transducin-like enhancer protein 4 (773 aa).

Disordered regions lie at residues 1–22, 140–162, and 182–360; these read MIRDLSKMYPQTRHPAPHQPAQ, HGHGLPVPLTPHPSGLQPPAIPP, and LPIK…ASSL. Residues 1–136 form a q domain region; sequence MIRDLSKMYP…AIIGQQLQAQ (136 aa). Positions 137–204 are GP domain; that stretch reads HLSHGHGLPV…HQRDRDSIKS (68 aa). The span at 183–202 shows a compositional bias: basic and acidic residues; that stretch reads PIKDEKKHHDNDHQRDRDSI. Positions 203 to 212 are enriched in low complexity; the sequence is KSSSVSPSAS. Residues 205 to 274 are ccN domain; sequence SSVSPSASFR…SPRGSPAHSP (70 aa). 3 positions are modified to phosphoserine: S208, S212, and S222. Residues 215 to 252 are compositionally biased toward basic and acidic residues; that stretch reads GAEKHRNSADYSSESKKQKTEEKEIAARYDSDGEKSDD. K237 bears the N6-acetyllysine mark. Residues S245, S250, S269, and S273 each carry the phosphoserine modification. The span at 273 to 289 shows a compositional bias: basic and acidic residues; it reads SPRENGLDKTRLLKKDA. Residues 275-452 are SP domain; it reads RENGLDKTRL…PGGKPAYSFH (178 aa). K281 is subject to N6-acetyllysine. Over residues 290-305 the composition is skewed to low complexity; it reads PISPASIASSSSTPSS. S292 is subject to Phosphoserine. The span at 317 to 328 shows a compositional bias: polar residues; the sequence is TTPVSKSNTPTP. At T318 the chain carries Phosphothreonine. S321 and S323 each carry phosphoserine. Residues T325, T327, T334, and T340 each carry the phosphothreonine modification. S419 bears the Phosphoserine mark. WD repeat units lie at residues 485–523, 531–570, 575–614, 617–656, 658–697, 699–738, and 740–773; these read NHGEVVCAVTISNPTRHVYTGGKGCVKVWDISHPGNKSP, NRDNYIRSCRLLPDGRTLIVGGEASTLSIWDLAAPTPRIK, SSAPACYALAISPDSKVCFSCCSDGNIAVWDLHNQTLVRQ, GHTDGASCIDISNDGTKLWTGGLDNTVRSWDLREGRQLQQ, DFTSQIFSLGYCPTGEWLAVGMENSNVEVLHVTKPDKYQL, LHESCVLSLKFAHCGKWFVSTGKDNLLNAWRTPYGASIFQ, and KESSSVLSCDISVDDKYIVTGSGDKKATVYEVIY.

It belongs to the WD repeat Groucho/TLE family. Homooligomer and heterooligomer with other family members. Interacts with PAX5. Interacts with LEF1, TCF7, TCF7L1 and TCF7L2. Interacts with ZNF703; TLE4 may mediate ZNF703 transcriptional repression. Interacts with SIX3 and SIX6. Interacts with PAX2. Interacts with TLE1. Phosphorylated. PAX5 binding increases phosphorylation. In terms of processing, ubiquitinated by XIAP/BIRC4. In all tissues examined, mostly in brain, and muscle.

The protein resides in the nucleus. In terms of biological role, transcriptional corepressor that binds to a number of transcription factors. Inhibits the transcriptional activation mediated by PAX5, and by CTNNB1 and TCF family members in Wnt signaling. The effects of full-length TLE family members may be modulated by association with dominant-negative AES. Essential for the transcriptional repressor activity of SIX3 during retina and lens development and for SIX3 transcriptional auto-repression. Involved in transcriptional repression of GNRHR and enhances MSX1-mediated transcriptional repression of CGA/alpha-GSU. The chain is Transducin-like enhancer protein 4 (TLE4) from Homo sapiens (Human).